Consider the following 157-residue polypeptide: DNA-binding protein MNB1B (157 aa).

3 disordered regions span residues 1–45 (MKGA…KRAP), 59–87 (FKEK…SESD), and 109–157 (YNKG…DDDE). Composition is skewed to basic and acidic residues over residues 10-27 (AKAD…EKPA) and 76-87 (AGDRWKSLSESD). The HMG box DNA-binding region spans 41–110 (PKRAPSAFFV…EYNKAIAAYN (70 aa)). Composition is skewed to acidic residues over residues 124–133 (EEEEEDEEES) and 141–157 (NDED…DDDE). Ser-149 carries the phosphoserine; by CK2 modification.

Expressed in all tissues examined.

It localises to the nucleus. In terms of biological role, recognizes an AAGG motif at the MNF1-binding site. This is DNA-binding protein MNB1B (MNB1B) from Zea mays (Maize).